Reading from the N-terminus, the 172-residue chain is Myosin regulatory light chain 2, smooth muscle minor isoform (172 aa).

Ser2 is modified (N-acetylserine). Residue Thr19 is modified to Phosphothreonine; by MLCK. Ser20 carries the post-translational modification Phosphoserine; by MLCK. 3 EF-hand domains span residues 29-64, 98-133, and 134-169; these read SQIQ…LGKN, DPED…MGDR, and FTDE…GAKD. Residues Asp42, Asn44, Asp46, and Asp53 each contribute to the Ca(2+) site.

Myosin is a hexamer of 2 heavy chains and 4 light chains. Phosphorylation increases the actin-activated myosin ATPase activity and thereby regulates the contractile activity.

In terms of biological role, myosin regulatory subunit that plays an important role in regulation of both smooth muscle and nonmuscle cell contractile activity. Implicated in cytokinesis, receptor capping, and cell locomotion. This chain is Myosin regulatory light chain 2, smooth muscle minor isoform, found in Gallus gallus (Chicken).